Consider the following 334-residue polypeptide: Serine/Arginine-related protein 53 (334 aa).

A compositionally biased stretch (basic and acidic residues) spans 1–13 (MGRRSSDTEEESR). Disordered stretches follow at residues 1-173 (MGRR…IKAG), 201-222 (LKAKERNEEEAKRRKEEDQATL), and 241-290 (VQQT…SIPT). Positions 14-24 (SKRKKKHRRRS) are enriched in basic residues. Residues 44 to 62 (PRSESRSWSRDRQPRSHSY) show a composition bias toward basic and acidic residues. The span at 78-118 (SRRKRSRSRSRGRGKSYRVQRSRSKSRTRRSRSRPRPRSHS) shows a compositional bias: basic residues. Composition is skewed to basic and acidic residues over residues 132–166 (RSRDRDRRKVRDKEKREKEKDKGKDKEAHTIKRGD), 201–218 (LKAKERNEEEAKRRKEED), and 247–262 (SSKDVKKSVEPSEVKH). A coiled-coil region spans residues 180-234 (AEQAKARLQLVLEAAAKADEALKAKERNEEEAKRRKEEDQATLGEQVKRVKEIEA).

In terms of assembly, interacts (via Arg/Ser-rich domain) with LUC7L3, RBM39 and RSF1. Phosphorylated.

The protein resides in the nucleus speckle. Its subcellular location is the nucleus. It localises to the cytoplasm. In terms of biological role, plays a role in pre-mRNA splicing. Involved in both constitutive and alternative pre-mRNA splicing. May have a role in the recognition of the 3' splice site during the second step of splicing. In Rattus norvegicus (Rat), this protein is Serine/Arginine-related protein 53 (Rsrc1).